The chain runs to 511 residues: D-alanine--D-alanyl carrier protein ligase (511 aa).

Residue 152 to 153 (TS) participates in ATP binding. Residue D199 participates in D-alanine binding. 294 to 299 (NAYGPT) serves as a coordination point for ATP. Residue V303 coordinates D-alanine. ATP-binding positions include D385, 397–400 (YGGR), and K499. D-alanine is bound at residue K499.

It belongs to the ATP-dependent AMP-binding enzyme family. DltA subfamily.

It localises to the cytoplasm. The enzyme catalyses holo-[D-alanyl-carrier protein] + D-alanine + ATP = D-alanyl-[D-alanyl-carrier protein] + AMP + diphosphate. The protein operates within cell wall biogenesis; lipoteichoic acid biosynthesis. In terms of biological role, catalyzes the first step in the D-alanylation of lipoteichoic acid (LTA), the activation of D-alanine and its transfer onto the D-alanyl carrier protein (Dcp) DltC. In an ATP-dependent two-step reaction, forms a high energy D-alanyl-AMP intermediate, followed by transfer of the D-alanyl residue as a thiol ester to the phosphopantheinyl prosthetic group of the Dcp. D-alanylation of LTA plays an important role in modulating the properties of the cell wall in Gram-positive bacteria, influencing the net charge of the cell wall. This Streptococcus agalactiae serotype III (strain NEM316) protein is D-alanine--D-alanyl carrier protein ligase.